Reading from the N-terminus, the 149-residue chain is Envelope glycoprotein UL4 (149 aa).

The signal sequence occupies residues 1–18 (MMLRTWISLPMVLLDAYC). 9 N-linked (GlcNAc...) asparagine; by host glycosylation sites follow: Asn46, Asn51, Asn59, Asn67, Asn105, Asn109, Asn119, Asn136, and Asn145.

It belongs to the RL11 family. Post-translationally, N-glycosylated and possibly O-glycosylated.

Its subcellular location is the virion membrane. The protein is Envelope glycoprotein UL4 (UL4) of Human cytomegalovirus (strain Merlin) (HHV-5).